A 153-amino-acid chain; its full sequence is Glucose-6-phosphate 1-dehydrogenase (153 aa).

NADP(+)-binding residues include Arg21 and Lys120. Lys120 is a D-glucose 6-phosphate binding site.

The protein belongs to the glucose-6-phosphate dehydrogenase family.

Its subcellular location is the cytoplasm. It localises to the cytosol. The enzyme catalyses D-glucose 6-phosphate + NADP(+) = 6-phospho-D-glucono-1,5-lactone + NADPH + H(+). It participates in carbohydrate degradation; pentose phosphate pathway; D-ribulose 5-phosphate from D-glucose 6-phosphate (oxidative stage): step 1/3. Functionally, cytosolic glucose-6-phosphate dehydrogenase that catalyzes the first and rate-limiting step of the oxidative branch within the pentose phosphate pathway/shunt, an alternative route to glycolysis for the dissimilation of carbohydrates and a major source of reducing power and metabolic intermediates for fatty acid and nucleic acid biosynthetic processes. The chain is Glucose-6-phosphate 1-dehydrogenase (ZW) from Hyalophora cecropia (Cecropia moth).